The chain runs to 369 residues: Core histone macro-H2A.1 (369 aa).

Residues K7 and K9 each carry the N6-lactoyllysine; alternate modification. The Histone H2A domain occupies 15–90; it reads RSAKAGVIFP…ILLAVANDEE (76 aa). K18 is modified (N6-methyllysine). K116 is subject to N6-acetyllysine; alternate. K116 is covalently cross-linked (Glycyl lysine isopeptide (Lys-Gly) (interchain with G-Cter in ubiquitin); alternate). K117 participates in a covalent cross-link: Glycyl lysine isopeptide (Lys-Gly) (interchain with G-Cter in ubiquitin). At K123 the chain carries N6-acetyllysine; alternate. K123 bears the N6,N6-dimethyllysine; alternate mark. K123 is covalently cross-linked (Glycyl lysine isopeptide (Lys-Gly) (interchain with G-Cter in SUMO2); alternate). The segment at 128-180 is disordered; that stretch reads ITPPPAKKAKSPSQKKTVSKKTGGKKGARKSKKKQGEVSKSASADSTTEGTPA. A Phosphothreonine modification is found at T129. Residues 144-160 show a composition bias toward basic residues; sequence TVSKKTGGKKGARKSKK. Positions 165 to 177 are enriched in polar residues; that stretch reads VSKSASADSTTEG. A Glycyl lysine isopeptide (Lys-Gly) (interchain with G-Cter in SUMO2) cross-link involves residue K167. Phosphoserine occurs at positions 170 and 173. T178 is modified (phosphothreonine). A Macro domain is found at 184–367; it reads TVLSTKSLFL…IYVQEMAKLD (184 aa). Residue K189 forms a Glycyl lysine isopeptide (Lys-Gly) (interchain with G-Cter in SUMO2) linkage. 8 residues coordinate a glycoprotein: D203, I204, V226, S275, G312, S313, G314, and N316. K320 participates in a covalent cross-link: Glycyl lysine isopeptide (Lys-Gly) (interchain with G-Cter in SUMO2).

This sequence belongs to the histone H2A family. As to quaternary structure, the nucleosome is a histone octamer containing two molecules each of H2A, H2B, H3 and H4 assembled in one H3-H4 heterotetramer and two H2A-H2B heterodimers. In terms of processing, ADP-ribosylated. Post-translationally, monoubiquitinated at either Lys-116 or Lys-117. May also be polyubiquitinated. Ubiquitination is mediated by the CUL3/SPOP E3 complex and does not promote proteasomal degradation. Instead, it is required for enrichment in inactive X chromosome chromatin. In terms of tissue distribution, present in liver (at protein level).

It localises to the nucleus. Its subcellular location is the chromosome. Variant histone H2A which replaces conventional H2A in a subset of nucleosomes where it represses transcription. Nucleosomes wrap and compact DNA into chromatin, limiting DNA accessibility to the cellular machineries which require DNA as a template. Histones thereby play a central role in transcription regulation, DNA repair, DNA replication and chromosomal stability. DNA accessibility is regulated via a complex set of post-translational modifications of histones, also called histone code, and nucleosome remodeling. In terms of biological role, isoform that specifically binds poly-ADP-ribose and O-acetyl-ADP-ribose and plays a key role in NAD(+) metabolism. Able to bind to the ends of poly-ADP-ribose chains created by PARP1 and cap them. This prevents PARP1 from further addition of ADP-ribose and thus limits the consumption of nuclear NAD(+), allowing the cell to maintain proper NAD(+) levels in both the nucleus and the mitochondria to promote proper mitochondrial respiration. Functionally, in contrast to isoform 1, does not bind poly-ADP-ribose. The sequence is that of Core histone macro-H2A.1 from Gallus gallus (Chicken).